The following is a 174-amino-acid chain: Small ribosomal subunit protein uS5 (174 aa).

The S5 DRBM domain maps to 16-79 (FSELIVSVRR…NAAKKNMIRV (64 aa)).

The protein belongs to the universal ribosomal protein uS5 family. In terms of assembly, part of the 30S ribosomal subunit. Contacts proteins S4 and S8.

Its function is as follows. With S4 and S12 plays an important role in translational accuracy. Functionally, located at the back of the 30S subunit body where it stabilizes the conformation of the head with respect to the body. The chain is Small ribosomal subunit protein uS5 from Ehrlichia canis (strain Jake).